A 539-amino-acid chain; its full sequence is Protein mushroom body miniature (539 aa).

A compositionally biased stretch (polar residues) spans 1–11; sequence MHNSGGQSGWN. The segment at 1–345 is disordered; the sequence is MHNSGGQSGW…EDDKKARKQK (345 aa). The span at 67–79 shows a compositional bias: basic and acidic residues; sequence KFRDPQQELDNHQ. A compositionally biased stretch (basic residues) spans 80-89; sequence PNKRGGRRNR. A compositionally biased stretch (gly residues) spans 90–101; the sequence is GGGGGGGGWGGR. Over residues 199–208 the composition is skewed to basic and acidic residues; the sequence is IKKEKEMEHK. Low complexity predominate over residues 268-289; sequence VASTPKPKAVKPVSSSDSSTSD. 2 positions are modified to phosphoserine: Ser-288 and Ser-290. Thr-292 and Thr-327 each carry phosphothreonine. Acidic residues predominate over residues 327-336; sequence TDEEESTEPE. The residue at position 332 (Ser-332) is a Phosphoserine. Thr-333 is modified (phosphothreonine). CCHC-type zinc fingers lie at residues 354–367 and 371–386; these read CGIC…SFQC and CRNC…NCPN. The tract at residues 421–513 is disordered; that stretch reads VTAPVSAKPK…AASLPPQVFP (93 aa). Positions 428–447 are enriched in basic residues; sequence KPKKDKKASIKKIKKSSQKR. Over residues 456–480 the composition is skewed to acidic residues; the sequence is DEEDDEEDDDEDEDDSSESDDSESS.

May be phosphorylated in vivo by CkIIalpha. mbm and CkIIalpha colocalize to the nucleolus and mbm is phosphorylated in vitro by CkIIalpha. In terms of tissue distribution, shows widespread expression in third instar larval brain with no apparent difference between males and females (at protein level). Detected at low levels in the mushroom body neuropil and is also expressed in many cells of the brain outside the mushroom body (at protein level). Not detected in third instar larval brain cells in anaphase (at protein level).

It localises to the nucleus. It is found in the nucleolus. The protein resides in the cytoplasm. Functionally, required for small ribosomal subunit biogenesis in neuroblasts. Plays a role in mushroom body development. This Drosophila melanogaster (Fruit fly) protein is Protein mushroom body miniature.